The following is a 171-amino-acid chain: MNHEQPDIESQQSAADAAATAGVNDEVERLRAEIEQVKADALRERADLENQRKRVARDIEQARKFANEKLLGDLLPVFDSLDAGLKAAGDDPHPLREGLELTYKQLLKVAADNGLVLLDPIGQPFNPEHHQAISQVPTPGAAPGSVVTVFQKGYLLNERLLRPALVVVAAD.

The interval 1-22 (MNHEQPDIESQQSAADAAATAG) is disordered.

Belongs to the GrpE family. As to quaternary structure, homodimer.

Its subcellular location is the cytoplasm. Functionally, participates actively in the response to hyperosmotic and heat shock by preventing the aggregation of stress-denatured proteins, in association with DnaK and GrpE. It is the nucleotide exchange factor for DnaK and may function as a thermosensor. Unfolded proteins bind initially to DnaJ; upon interaction with the DnaJ-bound protein, DnaK hydrolyzes its bound ATP, resulting in the formation of a stable complex. GrpE releases ADP from DnaK; ATP binding to DnaK triggers the release of the substrate protein, thus completing the reaction cycle. Several rounds of ATP-dependent interactions between DnaJ, DnaK and GrpE are required for fully efficient folding. The sequence is that of Protein GrpE from Stenotrophomonas maltophilia (strain K279a).